A 356-amino-acid chain; its full sequence is Mannonate dehydratase 2 (356 aa).

The protein belongs to the mannonate dehydratase family. It depends on Fe(2+) as a cofactor. The cofactor is Mn(2+).

It carries out the reaction D-mannonate = 2-dehydro-3-deoxy-D-gluconate + H2O. It participates in carbohydrate metabolism; pentose and glucuronate interconversion. Functionally, catalyzes the dehydration of D-mannonate. The protein is Mannonate dehydratase 2 of Bacillus licheniformis (strain ATCC 14580 / DSM 13 / JCM 2505 / CCUG 7422 / NBRC 12200 / NCIMB 9375 / NCTC 10341 / NRRL NRS-1264 / Gibson 46).